Reading from the N-terminus, the 280-residue chain is Killer cell lectin-like receptor 7 (280 aa).

At 1 to 44 the chain is on the cytoplasmic side; it reads MSEQEVTYSTVRFHESSRLQKLVRTEEPQRPREACYREYSVPWK. A helical; Signal-anchor for type II membrane protein membrane pass occupies residues 45-66; sequence LIVIACGILCFLLLVTVALLAI. Topologically, residues 67 to 280 are extracellular; the sequence is TIFQHSQQKH…CGKRLDKFPH (214 aa). A glycan (N-linked (GlcNAc...) asparagine) is linked at Asn104. Residues 156 to 275 enclose the C-type lectin domain; sequence GFEKYWFCYG…SYICICGKRL (120 aa). Cystine bridges form between Cys163-Cys168, Cys181-Cys269, Cys185-Cys271, and Cys250-Cys263. Asn239 carries an N-linked (GlcNAc...) asparagine glycan.

As to quaternary structure, homodimer; disulfide-linked.

It localises to the membrane. Receptor on natural killer (NK) cells for class I MHC. The polypeptide is Killer cell lectin-like receptor 7 (Klra7) (Mus musculus (Mouse)).